The sequence spans 487 residues: Serine/threonine-protein kinase 4 (487 aa).

M1 carries the post-translational modification N-acetylmethionine. At T3 the chain carries Phosphothreonine. A Protein kinase domain is found at 30-281 (FDVLEKLGEG…ATQLLQHPFV (252 aa)). Residues 36–44 (LGEGSYGSV) and K59 each bind ATP. Residue D149 is the Proton acceptor of the active site. T183 carries the phosphothreonine; by autocatalysis modification. S265 carries the phosphoserine modification. Residues 290–310 (LRDLINEAMDVKLKRQESQQR) are a coiled coil. The segment covering 303–312 (KRQESQQREV) has biased composition (basic and acidic residues). Residues 303–332 (KRQESQQREVDQDDEENSEEDEMDSGTMVR) form a disordered region. Residues 313 to 326 (DQDDEENSEEDEMD) show a composition bias toward acidic residues. S320 bears the Phosphoserine mark. A phosphothreonine mark is found at T340 and T367. Residue T387 is modified to Phosphothreonine; by PKB/AKT1. A phosphoserine mark is found at S410 and S414. Y433 is subject to Phosphotyrosine. In terms of domain architecture, SARAH spans 433–480 (YEFLKSWTVEDLQKRLLALDPMMEQEIEEIRQKYQSKRQPILDAIEAK).

It belongs to the protein kinase superfamily. STE Ser/Thr protein kinase family. STE20 subfamily. In terms of assembly, homodimer; mediated via the coiled-coil region. Interacts with NORE1, which inhibits autoactivation. Interacts with and stabilizes SAV1. Interacts with RASSF1. Interacts with FOXO3. Interacts with RASSF2 (via SARAH domain). Interacts with AR, PKB/AKT1, TNNI3 and SIRT1. Interacts with DLG5 (via PDZ domain 3). Interacts with MARK3 in the presence of DLG5. Interacts with SCRIB in the presence of DLG5. It depends on Mg(2+) as a cofactor. In terms of processing, autophosphorylated on serine and threonine residues. Phosphorylation at Thr-387 by PKB/AKT1, leads to inhibition of its: kinase activity, nuclear translocation and autophosphorylation at Thr-183. It also diminishes its cleavage by caspases and its ability to phosphorylate FOXO3. Post-translationally, proteolytically cleaved by caspase-3 during apoptosis at Asp-326 and Asp-349 resulting in a 37 kDa or a 39 kDa subunit respectively. The 39 kDa subunit is further cleaved into the 37 kDa form. Proteolytic cleavage results in kinase activation and nuclear translocation of the truncated form (MST1/N). It is less likely that cleavage at Asp-349 is a prerequisite for activation as this site is not conserved in the murine ortholog. In terms of tissue distribution, expressed in prostate cancer and levels increase from the normal to the malignant state (at protein level). Ubiquitously expressed.

It localises to the cytoplasm. The protein localises to the nucleus. It carries out the reaction L-seryl-[protein] + ATP = O-phospho-L-seryl-[protein] + ADP + H(+). The enzyme catalyses L-threonyl-[protein] + ATP = O-phospho-L-threonyl-[protein] + ADP + H(+). With respect to regulation, inhibited by the C-terminal non-catalytic region. Activated by caspase-cleavage. Full activation also requires homodimerization and autophosphorylation of Thr-183. Activated by RASSF1 which acts by preventing its dephosphorylation. Functionally, stress-activated, pro-apoptotic kinase which, following caspase-cleavage, enters the nucleus and induces chromatin condensation followed by internucleosomal DNA fragmentation. Key component of the Hippo signaling pathway which plays a pivotal role in organ size control and tumor suppression by restricting proliferation and promoting apoptosis. The core of this pathway is composed of a kinase cascade wherein STK3/MST2 and STK4/MST1, in complex with its regulatory protein SAV1, phosphorylates and activates LATS1/2 in complex with its regulatory protein MOB1, which in turn phosphorylates and inactivates YAP1 oncoprotein and WWTR1/TAZ. Phosphorylation of YAP1 by LATS2 inhibits its translocation into the nucleus to regulate cellular genes important for cell proliferation, cell death, and cell migration. STK3/MST2 and STK4/MST1 are required to repress proliferation of mature hepatocytes, to prevent activation of facultative adult liver stem cells (oval cells), and to inhibit tumor formation. Phosphorylates 'Ser-14' of histone H2B (H2BS14ph) during apoptosis. Phosphorylates FOXO3 upon oxidative stress, which results in its nuclear translocation and cell death initiation. Phosphorylates MOBKL1A, MOBKL1B and RASSF2. Phosphorylates TNNI3 (cardiac Tn-I) and alters its binding affinity to TNNC1 (cardiac Tn-C) and TNNT2 (cardiac Tn-T). Phosphorylates FOXO1 on 'Ser-212' and regulates its activation and stimulates transcription of PMAIP1 in a FOXO1-dependent manner. Phosphorylates SIRT1 and inhibits SIRT1-mediated p53/TP53 deacetylation, thereby promoting p53/TP53 dependent transcription and apoptosis upon DNA damage. Acts as an inhibitor of PKB/AKT1. Phosphorylates AR on 'Ser-650' and suppresses its activity by intersecting with PKB/AKT1 signaling and antagonizing formation of AR-chromatin complexes. The chain is Serine/threonine-protein kinase 4 from Homo sapiens (Human).